We begin with the raw amino-acid sequence, 302 residues long: Glutamate/aspartate import solute-binding protein (302 aa).

The N-terminal stretch at 1-22 is a signal peptide; the sequence is MQLRKLTTAMLVMGLSAGLAHA.

The protein belongs to the bacterial solute-binding protein 3 family. As to quaternary structure, the complex is composed of two ATP-binding proteins (GltL), two transmembrane proteins (GltJ and GltK) and a solute-binding protein (GltI).

The protein resides in the periplasm. In terms of biological role, part of the ABC transporter complex GltIJKL involved in glutamate and aspartate uptake. Binds to both glutamate and aspartate. In Salmonella typhimurium (strain LT2 / SGSC1412 / ATCC 700720), this protein is Glutamate/aspartate import solute-binding protein (gltI).